Consider the following 354-residue polypeptide: Selenide, water dikinase (354 aa).

C23 is an active-site residue. ATP-binding positions include K26 and 54–56; that span reads TSD. D57 is a Mg(2+) binding site. Residues D74, D97, and 145-147 each bind ATP; that span reads GHS. D97 lines the Mg(2+) pocket. D233 serves as a coordination point for Mg(2+).

This sequence belongs to the selenophosphate synthase 1 family. Class I subfamily. In terms of assembly, homodimer. It depends on Mg(2+) as a cofactor.

It catalyses the reaction hydrogenselenide + ATP + H2O = selenophosphate + AMP + phosphate + 2 H(+). In terms of biological role, synthesizes selenophosphate from selenide and ATP. The protein is Selenide, water dikinase of Burkholderia cenocepacia (strain ATCC BAA-245 / DSM 16553 / LMG 16656 / NCTC 13227 / J2315 / CF5610) (Burkholderia cepacia (strain J2315)).